The following is a 107-amino-acid chain: Iron-binding protein IscA (107 aa).

Fe cation-binding residues include Cys35, Cys99, and Cys101.

This sequence belongs to the HesB/IscA family. In terms of assembly, homodimer; may form tetramers and higher multimers. Fe cation is required as a cofactor.

Its function is as follows. Is able to transfer iron-sulfur clusters to apo-ferredoxin. Multiple cycles of [2Fe2S] cluster formation and transfer are observed, suggesting that IscA acts catalytically. Recruits intracellular free iron so as to provide iron for the assembly of transient iron-sulfur cluster in IscU in the presence of IscS, L-cysteine and the thioredoxin reductase system TrxA/TrxB. This chain is Iron-binding protein IscA, found in Enterobacter sp. (strain 638).